Here is a 276-residue protein sequence, read N- to C-terminus: Aurora kinase C (276 aa).

Residues 16–266 (FEIGRPLGRG…LAQVLKHPWV (251 aa)) enclose the Protein kinase domain. Residues 22–30 (LGRGKFGRV) and lysine 45 contribute to the ATP site. Aspartate 139 serves as the catalytic Proton acceptor. Position 171 is a phosphothreonine; by PKA (threonine 171).

This sequence belongs to the protein kinase superfamily. Ser/Thr protein kinase family. Aurora subfamily. Component of the chromosomal passenger complex (CPC) composed of at least BIRC5/survivin, CDCA8/borealin, INCENP, AURKB or AURKC; predominantly independent AURKB- and AURKC-containing complexes exist; in the complex interacts directly with BIRC5/survivin and INCENP. Interacts with TACC1. Expressed only in testis.

The protein localises to the nucleus. It localises to the chromosome. It is found in the centromere. The protein resides in the cytoplasm. Its subcellular location is the cytoskeleton. The protein localises to the spindle. It carries out the reaction L-seryl-[protein] + ATP = O-phospho-L-seryl-[protein] + ADP + H(+). The catalysed reaction is L-threonyl-[protein] + ATP = O-phospho-L-threonyl-[protein] + ADP + H(+). Its activity is regulated as follows. Okadaic acid, an inhibitor of protein phosphatase 1 (PP1), protein phosphatase 2A (PP2A) and protein phosphatase 5 (PP5), increases AURKC activity. AURKC is also stabilized through its interaction with INCENP, which also acts as an activator. Serine/threonine-protein kinase component of the chromosomal passenger complex (CPC), a complex that acts as a key regulator of mitosis. The CPC complex has essential functions at the centromere in ensuring correct chromosome alignment and segregation and is required for chromatin-induced microtubule stabilization and spindle assembly. Also plays a role in meiosis and more particularly in spermatogenesis. Has redundant cellular functions with AURKB and can rescue an AURKB knockdown. Like AURKB, AURKC phosphorylates histone H3 at 'Ser-10' and 'Ser-28'. AURKC phosphorylates the CPC complex subunits BIRC5/survivin and INCENP leading to increased AURKC activity. Phosphorylates TACC1, another protein involved in cell division, at 'Ser-228'. The chain is Aurora kinase C (Aurkc) from Mus musculus (Mouse).